Consider the following 927-residue polypeptide: DNA-binding protein RFX6 (927 aa).

Disordered regions lie at residues 1–21 (MAKV…PQLP) and 81–108 (NFSS…QKKS). Residues 123 to 198 (TLQWLEDNYI…YHYYGIGIKE (76 aa)) constitute a DNA-binding region (RFX-type winged-helix).

This sequence belongs to the RFX family. Interacts with RFX3. As to expression, in the adult pancreas, expression is restricted to the islets where it could be detected in all endocrine lineages.

It localises to the nucleus. Transcription factor required to direct islet cell differentiation during endocrine pancreas development. Specifically required for the differentiation of 4 of the 5 islet cell types and for the production of insulin. Not required for pancreatic PP (polypeptide-producing) cells differentiation. Acts downstream of NEUROG3 and regulates the transcription factors involved in beta-cell maturation and function, thereby restricting the expression of the beta-cell differentiation and specification genes, and thus the beta-cell fate choice. Activates transcription by forming a heterodimer with RFX3 and binding to the X-box in the promoter of target genes. Involved in glucose-stimulated insulin secretion by promoting insulin and L-type calcium channel gene transcription. In Mus musculus (Mouse), this protein is DNA-binding protein RFX6 (Rfx6).